We begin with the raw amino-acid sequence, 351 residues long: Peptidyl-Lys metalloendopeptidase (351 aa).

The signal sequence occupies residues 1–22 (MFSLSSRFFLYSLCLSAVAVSA). Positions 23 to 183 (APGLSLSLSG…VARRSNLGKR (161 aa)) are excised as a propeptide. Disulfide bonds link Cys-189–Cys-259 and Cys-261–Cys-281. A Zn(2+)-binding site is contributed by His-301. Glu-302 is a catalytic residue. 2 residues coordinate Zn(2+): His-305 and Asp-314.

It belongs to the peptidase M35 family. It depends on Zn(2+) as a cofactor.

It localises to the secreted. It carries out the reaction Preferential cleavage in proteins: -Xaa-|-Lys- (in which Xaa may be Pro).. With respect to regulation, inhibited by chelating agents such as imidazole, alpha,alpha'-bipyridine, and 1,10-phenanthroline. This is Peptidyl-Lys metalloendopeptidase (MEP) from Armillaria mellea (Honey mushroom).